A 313-amino-acid chain; its full sequence is Ribosomal RNA small subunit methyltransferase H (313 aa).

S-adenosyl-L-methionine-binding positions include 35 to 37 (GGH), Asp55, Phe79, Asp100, and Gln107.

Belongs to the methyltransferase superfamily. RsmH family.

The protein resides in the cytoplasm. The enzyme catalyses cytidine(1402) in 16S rRNA + S-adenosyl-L-methionine = N(4)-methylcytidine(1402) in 16S rRNA + S-adenosyl-L-homocysteine + H(+). In terms of biological role, specifically methylates the N4 position of cytidine in position 1402 (C1402) of 16S rRNA. In Burkholderia ambifaria (strain MC40-6), this protein is Ribosomal RNA small subunit methyltransferase H.